Consider the following 369-residue polypeptide: Extracellular signal-regulated kinase 2 (369 aa).

A Protein kinase domain is found at 14–304; sequence YEVLQKIGKG…AEEALAHPFV (291 aa). ATP contacts are provided by residues 20–28 and K43; that span reads IGKGAYGIV. D137 acts as the Proton acceptor in catalysis. T176 is modified (phosphothreonine). The TXY motif lies at 176–178; sequence TEY. Phosphotyrosine is present on Y178. A disordered region spans residues 346–369; the sequence is KKKEERKKQTNPTKPDTTAPTLST. Polar residues predominate over residues 355–369; the sequence is TNPTKPDTTAPTLST.

Belongs to the protein kinase superfamily. CMGC Ser/Thr protein kinase family. MAP kinase subfamily. It depends on Mg(2+) as a cofactor. In terms of processing, dually phosphorylated on Thr-176 and Tyr-178, which activates the enzyme.

The enzyme catalyses L-seryl-[protein] + ATP = O-phospho-L-seryl-[protein] + ADP + H(+). It carries out the reaction L-threonyl-[protein] + ATP = O-phospho-L-threonyl-[protein] + ADP + H(+). Activated by tyrosine and threonine phosphorylation. Functionally, implicated in the relay of the cAMP chemotactic signal and cell differentiation. Important for receptor-mediated activation of adenylyl cyclase. This is Extracellular signal-regulated kinase 2 (erkB) from Dictyostelium discoideum (Social amoeba).